A 677-amino-acid chain; its full sequence is MKQEEAKLELDKLNSQIQHHDFLYYTQDNPQITDAEYDVLCHKRNLILESFPELASNNNYQDNVGSTPDAKFAKVKHAEKMLSLDNAFNQQDIEKFITRTKKLLDMDNSQSIAISCELKIDGLSFSVIYKKGEISQASTRGNGYFGENITNNVKTIKNLPHTIQNAPDSLEVRGEIYIDRSDFIQLNKDGNNFANPRNAAAGSVRQLDINITAQRKLKYFMYTIVNTKCLTQEETLNQLKTLGFCVNEHTITTNNIEDALNFYNQFYNNRSNISYDIDGIIYKVNDIKSQHILGATNKSPRWAIAYKFPAAEAKTLVNKISIQIGRTGVLTPIAELSPINIGGVIVTRASLHNKSEIERKDIREGDYVIVKRAGDVIPQVVDVDKNLRAQELTKFIFPTTCPSCGSNLFQAEQEVSIYCTGELFCKNQILEKIKHFVSKDAFNIIGFGKKQLLFFYEQGLITNIVDIFTLEEKISNSDLKLESLHGWGEKSIHNLFSAINNSKTISLENFIFALGIRFVGKYIAKILAKHFLSYEKWYHEMLRLAQDENYLLNIQQIGHKTIHSLKMFFTEQHNLDTINNLVRHLTITDAKTTSHLSLLHGKTIVFTGELSNMSRHEAKTKSETAGAKVSSSLSKNTDFLIVGNNPGSKYKKAQSLNIQILTEDLWLQYISPNTNEN.

Residues 34–38, 83–84, and E117 contribute to the NAD(+) site; these read DAEYD and SL. The active-site N6-AMP-lysine intermediate is the K119. NAD(+) is bound by residues R140, E175, K283, and K307. Zn(2+) is bound by residues C401, C404, C419, and C425. The BRCT domain maps to 594–677; it reads SHLSLLHGKT…QYISPNTNEN (84 aa).

It belongs to the NAD-dependent DNA ligase family. LigA subfamily. The cofactor is Mg(2+). Requires Mn(2+) as cofactor.

The enzyme catalyses NAD(+) + (deoxyribonucleotide)n-3'-hydroxyl + 5'-phospho-(deoxyribonucleotide)m = (deoxyribonucleotide)n+m + AMP + beta-nicotinamide D-nucleotide.. Its function is as follows. DNA ligase that catalyzes the formation of phosphodiester linkages between 5'-phosphoryl and 3'-hydroxyl groups in double-stranded DNA using NAD as a coenzyme and as the energy source for the reaction. It is essential for DNA replication and repair of damaged DNA. The polypeptide is DNA ligase (Ehrlichia canis (strain Jake)).